The primary structure comprises 422 residues: uncharacterized protein (422 aa).

In terms of domain architecture, RRM spans 5 to 83; sequence CVVYVGNIPY…RRLRVDFPTA (79 aa). The segment at 337-358 is disordered; sequence RSSSIPSSGSIRSPSLTTTSAQ.

The protein localises to the nucleus. This is an uncharacterized protein from Schizosaccharomyces pombe (strain 972 / ATCC 24843) (Fission yeast).